The chain runs to 257 residues: Pyridoxine 5'-phosphate synthase (257 aa).

Asparagine 6 is a binding site for 3-amino-2-oxopropyl phosphate. Residue 8–9 (DH) participates in 1-deoxy-D-xylulose 5-phosphate binding. Arginine 17 is a binding site for 3-amino-2-oxopropyl phosphate. Residue histidine 41 is the Proton acceptor of the active site. Arginine 43 and histidine 48 together coordinate 1-deoxy-D-xylulose 5-phosphate. Glutamate 68 (proton acceptor) is an active-site residue. Position 98 (threonine 98) interacts with 1-deoxy-D-xylulose 5-phosphate. The Proton donor role is filled by histidine 210. 3-amino-2-oxopropyl phosphate-binding positions include glycine 211 and 232 to 233 (GQ).

Belongs to the PNP synthase family. In terms of assembly, homooctamer; tetramer of dimers.

The protein localises to the cytoplasm. The enzyme catalyses 3-amino-2-oxopropyl phosphate + 1-deoxy-D-xylulose 5-phosphate = pyridoxine 5'-phosphate + phosphate + 2 H2O + H(+). It participates in cofactor biosynthesis; pyridoxine 5'-phosphate biosynthesis; pyridoxine 5'-phosphate from D-erythrose 4-phosphate: step 5/5. Its function is as follows. Catalyzes the complicated ring closure reaction between the two acyclic compounds 1-deoxy-D-xylulose-5-phosphate (DXP) and 3-amino-2-oxopropyl phosphate (1-amino-acetone-3-phosphate or AAP) to form pyridoxine 5'-phosphate (PNP) and inorganic phosphate. This chain is Pyridoxine 5'-phosphate synthase, found in Campylobacter jejuni subsp. jejuni serotype O:2 (strain ATCC 700819 / NCTC 11168).